The following is a 188-amino-acid chain: Apolipophorin-3 (188 aa).

Positions 1–17 (MVAKLFVLVACIALSHA) are cleaved as a signal peptide. Positions 18–22 (AMVRR) are excised as a propeptide.

Belongs to the insect apolipophorin-3 family. In terms of assembly, equilibrium between a soluble monomer and a bound lipoprotein form. Apolipophorin-3 associates with lipophorin during lipid loading until each particle contains 9 or 14 molecules of apolipophorin-3. Expressed in fat body and secreted in hemolymph. Also expressed in ovary and testis at lower levels.

Its subcellular location is the secreted. In terms of biological role, assists in the loading of diacylglycerol, generated from triacylglycerol stores in the fat body through the action of adipokinetic hormone, into lipophorin, the hemolymph lipoprotein. It increases the lipid carrying capacity of lipophorin by covering the expanding hydrophobic surface resulting from diacylglycerol uptake. It thus plays a critical role in the transport of lipids during flight in several species of insects. The sequence is that of Apolipophorin-3 from Spodoptera litura (Asian cotton leafworm).